Consider the following 123-residue polypeptide: Large ribosomal subunit protein uL24 (123 aa).

This sequence belongs to the universal ribosomal protein uL24 family. In terms of assembly, part of the 50S ribosomal subunit.

In terms of biological role, one of two assembly initiator proteins, it binds directly to the 5'-end of the 23S rRNA, where it nucleates assembly of the 50S subunit. Located at the polypeptide exit tunnel on the outside of the subunit. This Pyrobaculum islandicum (strain DSM 4184 / JCM 9189 / GEO3) protein is Large ribosomal subunit protein uL24.